Consider the following 451-residue polypeptide: Serine/threonine-protein phosphatase 2A 55 kDa regulatory subunit B delta isoform (451 aa).

7 WD repeats span residues 30–69 (AEADIISTVEFNYSGDLLATGDKGGRVVIFQREQENKSRP), 95–136 (EIEE…KRAE), 179–217 (AHTYHINSISVNSDHETYLSADDLRINLWHLEITDRSFN), 228–268 (ELTE…LCDR), 287–325 (EIISSISDVKFSHSGRYMMTRDYLSVKVWDLNMENRPVE), 342–383 (ENDC…DITL), and 418–451 (DFNKKILHTAWHPMENIIAVAATNNLYIFQDKIN).

This sequence belongs to the phosphatase 2A regulatory subunit B family. As to quaternary structure, PP2A consists of a common heterodimeric core enzyme, composed of a 36 kDa catalytic subunit (subunit C) and a 65 kDa constant regulatory subunit (PR65 or subunit A), that associates with a variety of regulatory subunits.

The protein resides in the cytoplasm. In terms of biological role, substrate-recognition subunit of protein phosphatase 2A (PP2A) that plays a key role in cell cycle by controlling mitosis entry and exit. The activity of PP2A complexes containing PPP2R2D (PR55-delta) fluctuate during the cell cycle: the activity is high in interphase and low in mitosis. In Gallus gallus (Chicken), this protein is Serine/threonine-protein phosphatase 2A 55 kDa regulatory subunit B delta isoform (PPP2R2D).